The chain runs to 97 residues: ESAT-6-like protein EsxS (97 aa).

Belongs to the WXG100 family. CFP-10 subfamily. As to quaternary structure, forms a tight complex with EsxR. Exists in heterodimeric and heterotetrameric forms.

The protein resides in the secreted. This chain is ESAT-6-like protein EsxS, found in Mycobacterium tuberculosis (strain ATCC 25618 / H37Rv).